The primary structure comprises 503 residues: Adenosine deaminase 2-A (503 aa).

A signal peptide spans 1-24; the sequence is MHVLFLGDLMWIYLLLLCCASCNG. 2 residues coordinate Zn(2+): His105 and His107. Asp108 contacts substrate. An N-linked (GlcNAc...) asparagine glycan is attached at Asn120. A disulfide bridge connects residues Cys130 and Cys152. Asn167 and Asn178 each carry an N-linked (GlcNAc...) asparagine glycan. Residues 197–204 and His286 contribute to the substrate site; that span reads WERFEQVF. Asn290 carries N-linked (GlcNAc...) asparagine glycosylation. Gly319 is a substrate binding site. His349 is a Zn(2+) binding site. The Proton donor role is filled by Glu352. N-linked (GlcNAc...) asparagine glycosylation is present at Asn371. His377 functions as the Proton acceptor in the catalytic mechanism. Residue Asp434 participates in Zn(2+) binding. A substrate-binding site is contributed by Asp435.

It belongs to the metallo-dependent hydrolases superfamily. Adenosine and AMP deaminases family. ADGF subfamily. It depends on Zn(2+) as a cofactor.

The protein localises to the secreted. It catalyses the reaction adenosine + H2O + H(+) = inosine + NH4(+). Adenosine deaminase that may contribute to the degradation of extracellular adenosine, a signaling molecule that controls a variety of cellular responses. May play a role in the regulation of cell proliferation. The chain is Adenosine deaminase 2-A from Danio rerio (Zebrafish).